The following is a 398-amino-acid chain: Tyrosine--tRNA ligase (398 aa).

Positions 42 to 51 match the 'HIGH' region motif; it reads PTAPDLHLGH. The 'KMSKS' region motif lies at 226–230; sequence KMSKS. Position 229 (Lys229) interacts with ATP. The S4 RNA-binding domain maps to 341-397; the sequence is AFLEAAGLVKSRGEAKRLIKEGALSVDGVRCDDANSPLASGEYVIKLGKKRFLRLTV.

It belongs to the class-I aminoacyl-tRNA synthetase family. TyrS type 2 subfamily. In terms of assembly, homodimer.

Its subcellular location is the cytoplasm. It catalyses the reaction tRNA(Tyr) + L-tyrosine + ATP = L-tyrosyl-tRNA(Tyr) + AMP + diphosphate + H(+). Its function is as follows. Catalyzes the attachment of tyrosine to tRNA(Tyr) in a two-step reaction: tyrosine is first activated by ATP to form Tyr-AMP and then transferred to the acceptor end of tRNA(Tyr). The chain is Tyrosine--tRNA ligase from Nitratidesulfovibrio vulgaris (strain ATCC 29579 / DSM 644 / CCUG 34227 / NCIMB 8303 / VKM B-1760 / Hildenborough) (Desulfovibrio vulgaris).